A 652-amino-acid chain; its full sequence is Beta-glucuronidase (652 aa).

The signal sequence occupies residues Met1–Ala22. Asn173 and Asn420 each carry an N-linked (GlcNAc...) asparagine glycan. Glu451 functions as the Proton donor in the catalytic mechanism. Residue Asn631 is glycosylated (N-linked (GlcNAc...) asparagine).

It belongs to the glycosyl hydrolase 2 family. In terms of assembly, homotetramer.

Its subcellular location is the lysosome. It carries out the reaction a beta-D-glucuronoside + H2O = D-glucuronate + an alcohol. Inhibited by L-aspartic acid. Its function is as follows. Plays an important role in the degradation of dermatan and keratan sulfates. This Sus scrofa (Pig) protein is Beta-glucuronidase (GUSB).